The chain runs to 301 residues: Putative phosphoenolpyruvate synthase regulatory protein (301 aa).

Over residues 1–24 the composition is skewed to low complexity; the sequence is MSEPVAPDGAQPAPAGATPQPLQP. Residues 1–27 form a disordered region; the sequence is MSEPVAPDGAQPAPAGATPQPLQPIAG. Residue 181–188 participates in ADP binding; the sequence is GVSRSGKT.

It belongs to the pyruvate, phosphate/water dikinase regulatory protein family. PSRP subfamily.

It carries out the reaction [pyruvate, water dikinase] + ADP = [pyruvate, water dikinase]-phosphate + AMP + H(+). The enzyme catalyses [pyruvate, water dikinase]-phosphate + phosphate + H(+) = [pyruvate, water dikinase] + diphosphate. Bifunctional serine/threonine kinase and phosphorylase involved in the regulation of the phosphoenolpyruvate synthase (PEPS) by catalyzing its phosphorylation/dephosphorylation. The sequence is that of Putative phosphoenolpyruvate synthase regulatory protein from Cupriavidus pinatubonensis (strain JMP 134 / LMG 1197) (Cupriavidus necator (strain JMP 134)).